Reading from the N-terminus, the 610-residue chain is UvrABC system protein C (610 aa).

The GIY-YIG domain occupies 16–94 (SQPGVYRMYD…IKLYQPRYNV (79 aa)). The 36-residue stretch at 204 to 239 (DQVLTQLIARMEKASQDLAFEEAARIRDQIQAVRRV) folds into the UVR domain.

The protein belongs to the UvrC family. Interacts with UvrB in an incision complex.

The protein localises to the cytoplasm. In terms of biological role, the UvrABC repair system catalyzes the recognition and processing of DNA lesions. UvrC both incises the 5' and 3' sides of the lesion. The N-terminal half is responsible for the 3' incision and the C-terminal half is responsible for the 5' incision. In Salmonella heidelberg (strain SL476), this protein is UvrABC system protein C.